The primary structure comprises 412 residues: Protein png-1 (412 aa).

The Zn(2+) site is built by C150, C153, C182, and C185. The disordered stretch occupies residues 363 to 412; sequence AAAARGGRSSPDNKSGANMMGSPATGDIKRPIPEDAPVPDVPSLWPTYGP.

Belongs to the transglutaminase-like superfamily. PNGase family.

The sequence is that of Protein png-1 (un-7) from Neurospora crassa (strain ATCC 24698 / 74-OR23-1A / CBS 708.71 / DSM 1257 / FGSC 987).